The sequence spans 97 residues: Osteocalcin (97 aa).

Residues 1 to 20 (MKAAALLLLAALLTFSLCRS) form the signal peptide. Positions 21–48 (APDGSDARSAKAFISHRQRAEMVRRQKR) are excised as a propeptide. A Gla domain is found at 49–95 (HYAQDSGVAGAPPNPLEAQREVCELSPDCDELADQIGFQEAYRRFYG). The Ca(2+) site is built by E65, E69, E72, and D78. A 4-carboxyglutamate mark is found at E65, E69, and E72. C71 and C77 are disulfide-bonded.

This sequence belongs to the osteocalcin/matrix Gla protein family. In terms of processing, gamma-carboxyglutamate residues are formed by vitamin K dependent carboxylation by GGCX. These residues are essential for the binding of calcium.

Its subcellular location is the secreted. The carboxylated form is one of the main organic components of the bone matrix, which constitutes 1-2% of the total bone protein. The carboxylated form binds strongly to apatite and calcium. The chain is Osteocalcin (BGLAP) from Gallus gallus (Chicken).